We begin with the raw amino-acid sequence, 1807 residues long: Nucleoporin nup189 (1807 aa).

Residues 1–118 (MFGQNNSSGF…SGGGLFGSNT (118 aa)) are disordered. GLFG repeat units follow at residues 26–29 (GLFG) and 66–69 (GLFG). The segment covering 29-61 (GSNSNTPGNTLFGSQNTSTTGFGQNTTQPLFGS) has biased composition (polar residues). The segment covering 62–77 (NTNGGLFGNRNNTTTT) has biased composition (low complexity). A compositionally biased stretch (gly residues) spans 78–90 (GGTGFGMSSGTGM). A compositionally biased stretch (polar residues) spans 93 to 108 (QSNTPAFGGTNNATNP). GLFG repeat units follow at residues 112 to 115 (GLFG), 152 to 155 (GLFG), 177 to 180 (GLFG), 308 to 311 (GLFG), 335 to 338 (GLFG), 350 to 353 (GLFG), 381 to 384 (GLFG), 399 to 402 (GLFG), 435 to 438 (GLFG), and 521 to 524 (GLFG). Polar residues predominate over residues 565 to 584 (PGTGLFGSTQTNNATSNTGT). Positions 565–685 (PGTGLFGSTQ…SSTTSQVAPT (121 aa)) are disordered. 4 GLFG repeats span residues 585 to 588 (GLFG), 611 to 614 (GLFG), 627 to 630 (GLFG), and 646 to 649 (GLFG). Over residues 588 to 600 (GSNNANTTNTGGS) the composition is skewed to low complexity. Residues 603–644 (NKPSTTTGGLFGNTTAQQPSTTTSGLFGASNTNNQAQTSNFG) show a composition bias toward polar residues. Low complexity predominate over residues 653–663 (AGQQQQPLQAS). A compositionally biased stretch (polar residues) spans 664–685 (IDQNPYGNNPLFSSTTSQVAPT). S724 bears the Phosphoserine mark. The interval 785–814 (QNGVKNGNDAKSDSKVQEKAPQNEADGSLK) is disordered. Positions 792–802 (NDAKSDSKVQE) are enriched in basic and acidic residues. The Peptidase S59 domain maps to 822-963 (SDDYWMKPSI…GKWIFKVQHF (142 aa)). Residues 974 to 1020 (EENDMSSTSNEAGNLKKYDQPNLKVSGKNDSFVTHHTPGAFPNDSKN) form a disordered region. Position 1051 is a phosphoserine (S1051). The segment at 1082–1104 (KENNVPLSEDDLSNSSESSNESV) is disordered. Residues 1094–1104 (SNSSESSNESV) show a composition bias toward low complexity.

Belongs to the nucleoporin GLFG family. As to quaternary structure, interacts (via G-L-F-G repeats) with rpn15/dss1. Interacts with raf1. In terms of assembly, interacts with ned1. Nup189 is autocatalytically cleaved in nup98 and nup96.

The protein localises to the nucleus. The protein resides in the nuclear pore complex. Functions as a component of the nuclear pore complex (NPC). NPC components, collectively referred to as nucleoporins (NUPs), can play the role of both NPC structural components and of docking or interaction partners for transiently associated nuclear transport factors. Active directional transport is assured by both, a Phe-Gly (FG) repeat affinity gradient for these transport factors across the NPC and a transport cofactor concentration gradient across the nuclear envelope. Nup189 is autocatalytically cleaved in vivo in 2 polypeptides which assume different functions in the NPC. Nup98 as one of the FG repeat nucleoporins participates in karyopherin interactions and contains part of the autocatalytic cleavage activity. Nup96 as part of the NUP84 complex is involved in nuclear poly(A)+ RNA and tRNA export. The polypeptide is Nucleoporin nup189 (nup189) (Schizosaccharomyces pombe (strain 972 / ATCC 24843) (Fission yeast)).